Reading from the N-terminus, the 987-residue chain is Ras guanine nucleotide exchange factor efc25 (987 aa).

Residues 1–10 (MRRPNLDRLR) show a composition bias toward basic and acidic residues. Disordered stretches follow at residues 1 to 50 (MRRP…STMS), 100 to 130 (FSST…PEIR), and 529 to 552 (NANT…ISRS). The segment covering 19–39 (TSVSKPSTPSYSTYSLSPTFS) has biased composition (low complexity). 3 stretches are compositionally biased toward polar residues: residues 40 to 50 (DKSVLSPSTMS), 102 to 111 (STHSLTRQPS), and 540 to 552 (RQTN…ISRS). Residue S552 is modified to Phosphoserine. The N-terminal Ras-GEF domain maps to 590–723 (SDNNVKGGTL…VILSEIDNLW (134 aa)). A Ras-GEF domain is found at 752-985 (TPEEFASQMT…FDKSLSLEPR (234 aa)).

Its subcellular location is the cytoplasm. In terms of biological role, has a role in chromosome segregation and cell morphology upstream of the ras1-scd1 pathway. Promotes the exchange of ras1-bound GDP by GTP leading to its activation. This Schizosaccharomyces pombe (strain 972 / ATCC 24843) (Fission yeast) protein is Ras guanine nucleotide exchange factor efc25 (efc25).